A 231-amino-acid polypeptide reads, in one-letter code: MPCRREEEEEAGDEAEGEEDDDSFLLLQQSVTLGGSTDVDRLIVQIGETLQLDTAHDRPASPCAAPGPPPAPPRVLAALSADKTGTPARRLLRPTGSAETGDPAPPGAVRCVLGERGRVRGRSAPYCVAEIAPGASALPGPGRRGWLPGSVASHRIQQRRWTAGGARAADDDPHRLLQQLVLSGNLIKEAVRRLQRAVAAVAATSPASAPGSGGGRSGPDSVTLQPSGAWL.

2 disordered regions span residues 1–24 and 53–109; these read MPCR…DDSF and DTAH…PGAV. Positions 7–23 are enriched in acidic residues; the sequence is EEEEAGDEAEGEEDDDS. The involved in GSK-3 binding stretch occupies residues 172–194; that stretch reads DPHRLLQQLVLSGNLIKEAVRRL. Residues 203-231 form a disordered region; it reads ATSPASAPGSGGGRSGPDSVTLQPSGAWL.

This sequence belongs to the GSK-3-binding protein family. Binds GSK-3 and prevents GSK-3-dependent phosphorylation.

Its function is as follows. Positively regulates the Wnt signaling pathway by stabilizing beta-catenin through the association with GSK-3. In Mus musculus (Mouse), this protein is GSK-3-binding protein FRAT2 (Frat2).